The following is a 398-amino-acid chain: DnaJ-like protein R260 (398 aa).

Residues 7–72 enclose the J domain; it reads DLYEILGLTP…EKRRVYDQYG (66 aa). Residues 118-202 form a CR-type zinc finger; sequence KKTVKVTITV…CKGAGINKSE (85 aa). 4 CXXCXGXG motif repeats span residues 131–138, 147–154, 173–180, and 190–197; these read CDDCDATG, CKVCRGKG, CHGCQGKK, and CPSCKGAG. Positions 364-398 are disordered; that stretch reads LRQINTDPSDESQDRDSEESYGGHGRPEGVGCAQQ. Residues 371 to 382 are compositionally biased toward acidic residues; it reads PSDESQDRDSEE.

Zn(2+) is required as a cofactor.

The polypeptide is DnaJ-like protein R260 (Acanthamoeba polyphaga mimivirus (APMV)).